Consider the following 388-residue polypeptide: Succinate--CoA ligase [ADP-forming] subunit beta (388 aa).

The ATP-grasp domain occupies 9-244 (KQLFAEYGLP…PSQEDEREAH (236 aa)). Residues Lys46, 53–55 (GRG), Glu99, Thr102, and Glu107 each bind ATP. Mg(2+) contacts are provided by Asn199 and Asp213. Residues Asn264 and 321–323 (GIV) each bind substrate.

Belongs to the succinate/malate CoA ligase beta subunit family. Heterotetramer of two alpha and two beta subunits. Mg(2+) serves as cofactor.

It catalyses the reaction succinate + ATP + CoA = succinyl-CoA + ADP + phosphate. The catalysed reaction is GTP + succinate + CoA = succinyl-CoA + GDP + phosphate. Its pathway is carbohydrate metabolism; tricarboxylic acid cycle; succinate from succinyl-CoA (ligase route): step 1/1. Its function is as follows. Succinyl-CoA synthetase functions in the citric acid cycle (TCA), coupling the hydrolysis of succinyl-CoA to the synthesis of either ATP or GTP and thus represents the only step of substrate-level phosphorylation in the TCA. The beta subunit provides nucleotide specificity of the enzyme and binds the substrate succinate, while the binding sites for coenzyme A and phosphate are found in the alpha subunit. This Saccharophagus degradans (strain 2-40 / ATCC 43961 / DSM 17024) protein is Succinate--CoA ligase [ADP-forming] subunit beta.